Consider the following 183-residue polypeptide: MRAAYLFLLFLPAGLLAQGQYDLDPLPPFPDHVQYTHYSDQIDNPDYYDYQEVTPRPSEEQFQFQSQQQVQQEVIPAPTPEPGNAELEPTEPGPLDCREEQYPCTRLYSIHRPCKQCLNEVCFYSLRRVYVINKEICVRTVCAHEELLRADLCRDKFSKCGVMASSGLCQSVAASCARSCGSC.

The or 19 signal peptide spans M1–A17. Q18 carries the pyrrolidone carboxylic acid modification. Y47, Y48, and Y50 each carry sulfotyrosine. A disordered region spans residues S58–P94. The segment covering E60–V74 has biased composition (low complexity). A ShKT domain is found at C153–C183. Intrachain disulfides connect C153-C183, C160-C176, and C169-C180.

It belongs to the MFAP family. Forms a ternary complex with BGN and ELN. Interacts with FBN1 (via N-terminal domain) and FBN2. Post-translationally, forms intermolecular disulfide bonds either with other MAGP-1 molecules or with other components of the microfibrils. May form transglutaminase cross-links. In terms of processing, O-glycosylated.

The protein resides in the secreted. The protein localises to the extracellular space. It is found in the extracellular matrix. Its function is as follows. Component of the elastin-associated microfibrils. The chain is Microfibrillar-associated protein 2 (MFAP2) from Homo sapiens (Human).